The following is a 246-amino-acid chain: Proteasome subunit alpha type-6 (246 aa).

Belongs to the peptidase T1A family. In terms of assembly, the 26S proteasome consists of a 20S proteasome core and two 19S regulatory subunits. The 20S proteasome core is composed of 28 subunits that are arranged in four stacked rings, resulting in a barrel-shaped structure. The two end rings are each formed by seven alpha subunits, and the two central rings are each formed by seven beta subunits. The catalytic chamber with the active sites is on the inside of the barrel.

It localises to the cytoplasm. It is found in the nucleus. Functionally, the proteasome is a multicatalytic proteinase complex which is characterized by its ability to cleave peptides with Arg, Phe, Tyr, Leu, and Glu adjacent to the leaving group at neutral or slightly basic pH. The proteasome has an ATP-dependent proteolytic activity. In Oryza sativa subsp. japonica (Rice), this protein is Proteasome subunit alpha type-6 (PAA1).